We begin with the raw amino-acid sequence, 433 residues long: Serine hydroxymethyltransferase (433 aa).

121–123 (AHV) is a binding site for (6S)-5,6,7,8-tetrahydrofolate. Lysine 227 is subject to N6-(pyridoxal phosphate)lysine. Residue glutamate 243 participates in (6S)-5,6,7,8-tetrahydrofolate binding.

It belongs to the SHMT family. As to quaternary structure, homodimer. It depends on pyridoxal 5'-phosphate as a cofactor.

The protein localises to the cytoplasm. The protein operates within amino-acid biosynthesis; glycine biosynthesis; glycine from L-serine: step 1/1. In terms of biological role, catalyzes the reversible interconversion of serine and glycine with a modified folate serving as the one-carbon carrier. Also exhibits a pteridine-independent aldolase activity toward beta-hydroxyamino acids, producing glycine and aldehydes, via a retro-aldol mechanism. In Saccharolobus islandicus (strain L.S.2.15 / Lassen #1) (Sulfolobus islandicus), this protein is Serine hydroxymethyltransferase.